Here is a 517-residue protein sequence, read N- to C-terminus: UPF0522 protein B (517 aa).

The first 19 residues, 1–19 (MNKTIILLLISIIFEIVIS), serve as a signal peptide directing secretion. Residues Asn-148, Asn-245, Asn-333, Asn-345, Asn-370, Asn-423, Asn-432, and Asn-495 are each glycosylated (N-linked (GlcNAc...) asparagine).

This sequence belongs to the UPF0522 family.

It localises to the secreted. The chain is UPF0522 protein B from Dictyostelium discoideum (Social amoeba).